A 35-amino-acid chain; its full sequence is Cytochrome c-550 (35 aa).

3 residues coordinate heme c: C17, C20, and H21.

Binds 1 heme c group covalently per subunit.

Monoheme cytochrome which functions as an electron carrier in the reduction of nitrite by membrane vesicles. In Virgibacillus halodenitrificans (Bacillus halodenitrificans), this protein is Cytochrome c-550.